Here is a 153-residue protein sequence, read N- to C-terminus: IAA acetyltransferase (153 aa).

Residues 4–153 enclose the N-acetyltransferase domain; that stretch reads VTIARESPLQ…PLSLFMEKPL (150 aa).

Participates in the tryptophan-dependent indole-3-acetic acid production, which is a phytohormone released by A.brasilense. The sequence is that of IAA acetyltransferase from Azospirillum brasilense.